The primary structure comprises 268 residues: Phosphatidylglycerol--prolipoprotein diacylglyceryl transferase (268 aa).

A run of 7 helical transmembrane segments spans residues 23 to 43, 62 to 82, 97 to 117, 132 to 152, 179 to 199, 206 to 226, and 241 to 261; these read IGLR…RWLA, LLFN…VFFY, VWEG…AMIW, FVAP…FINL, SQLY…NIFI, ASVA…VEYV, and GQAL…WAYS. R145 provides a ligand contact to a 1,2-diacyl-sn-glycero-3-phospho-(1'-sn-glycerol).

This sequence belongs to the Lgt family.

The protein resides in the cell inner membrane. The enzyme catalyses L-cysteinyl-[prolipoprotein] + a 1,2-diacyl-sn-glycero-3-phospho-(1'-sn-glycerol) = an S-1,2-diacyl-sn-glyceryl-L-cysteinyl-[prolipoprotein] + sn-glycerol 1-phosphate + H(+). The protein operates within protein modification; lipoprotein biosynthesis (diacylglyceryl transfer). Functionally, catalyzes the transfer of the diacylglyceryl group from phosphatidylglycerol to the sulfhydryl group of the N-terminal cysteine of a prolipoprotein, the first step in the formation of mature lipoproteins. The protein is Phosphatidylglycerol--prolipoprotein diacylglyceryl transferase of Haemophilus influenzae (strain PittEE).